The following is a 331-amino-acid chain: 4-hydroxy-3-methylbut-2-enyl diphosphate reductase (331 aa).

Cys-12 serves as a coordination point for [4Fe-4S] cluster. (2E)-4-hydroxy-3-methylbut-2-enyl diphosphate is bound by residues His-43 and His-81. The dimethylallyl diphosphate site is built by His-43 and His-81. 2 residues coordinate isopentenyl diphosphate: His-43 and His-81. Cys-103 lines the [4Fe-4S] cluster pocket. A (2E)-4-hydroxy-3-methylbut-2-enyl diphosphate-binding site is contributed by His-131. His-131 serves as a coordination point for dimethylallyl diphosphate. His-131 is an isopentenyl diphosphate binding site. Residue Glu-133 is the Proton donor of the active site. Thr-170 lines the (2E)-4-hydroxy-3-methylbut-2-enyl diphosphate pocket. Position 198 (Cys-198) interacts with [4Fe-4S] cluster. Ser-226, Asn-228, and Ser-271 together coordinate (2E)-4-hydroxy-3-methylbut-2-enyl diphosphate. Residues Ser-226, Asn-228, and Ser-271 each contribute to the dimethylallyl diphosphate site. Residues Ser-226, Asn-228, and Ser-271 each contribute to the isopentenyl diphosphate site.

This sequence belongs to the IspH family. It depends on [4Fe-4S] cluster as a cofactor.

It carries out the reaction isopentenyl diphosphate + 2 oxidized [2Fe-2S]-[ferredoxin] + H2O = (2E)-4-hydroxy-3-methylbut-2-enyl diphosphate + 2 reduced [2Fe-2S]-[ferredoxin] + 2 H(+). It catalyses the reaction dimethylallyl diphosphate + 2 oxidized [2Fe-2S]-[ferredoxin] + H2O = (2E)-4-hydroxy-3-methylbut-2-enyl diphosphate + 2 reduced [2Fe-2S]-[ferredoxin] + 2 H(+). It functions in the pathway isoprenoid biosynthesis; dimethylallyl diphosphate biosynthesis; dimethylallyl diphosphate from (2E)-4-hydroxy-3-methylbutenyl diphosphate: step 1/1. Its pathway is isoprenoid biosynthesis; isopentenyl diphosphate biosynthesis via DXP pathway; isopentenyl diphosphate from 1-deoxy-D-xylulose 5-phosphate: step 6/6. Its function is as follows. Catalyzes the conversion of 1-hydroxy-2-methyl-2-(E)-butenyl 4-diphosphate (HMBPP) into a mixture of isopentenyl diphosphate (IPP) and dimethylallyl diphosphate (DMAPP). Acts in the terminal step of the DOXP/MEP pathway for isoprenoid precursor biosynthesis. This is 4-hydroxy-3-methylbut-2-enyl diphosphate reductase from Listeria monocytogenes serotype 4b (strain CLIP80459).